The following is a 113-amino-acid chain: Hydrogenase maturation factor HypA (113 aa).

His-2 provides a ligand contact to Ni(2+). Zn(2+) contacts are provided by Cys-73, Cys-75, Cys-89, and Cys-92.

Belongs to the HypA/HybF family.

In terms of biological role, involved in the maturation of [NiFe] hydrogenases. Required for nickel insertion into the metal center of the hydrogenase. The sequence is that of Hydrogenase maturation factor HypA from Methanocella arvoryzae (strain DSM 22066 / NBRC 105507 / MRE50).